Consider the following 102-residue polypeptide: Large ribosomal subunit protein bL21 (102 aa).

The segment covering 79–91 (RKDSKRKKGHRQP) has biased composition (basic residues). Residues 79 to 102 (RKDSKRKKGHRQPYTKLTIDKINA) form a disordered region.

Belongs to the bacterial ribosomal protein bL21 family. In terms of assembly, part of the 50S ribosomal subunit. Contacts protein L20.

This protein binds to 23S rRNA in the presence of protein L20. The protein is Large ribosomal subunit protein bL21 of Staphylococcus saprophyticus subsp. saprophyticus (strain ATCC 15305 / DSM 20229 / NCIMB 8711 / NCTC 7292 / S-41).